The sequence spans 543 residues: Probable protein kinase UbiB (543 aa).

The 378-residue stretch at 123–500 (DFDQQPLASA…HRRHAQARFL (378 aa)) folds into the Protein kinase domain. ATP is bound by residues 129 to 137 (LASASVAQV) and K152. Residue D286 is the Proton acceptor of the active site. 2 helical membrane-spanning segments follow: residues 499-519 (FLLGAGATLLLGSILLLPTHE) and 521-541 (LASAGLTISIICWLNGWWKIS).

The protein belongs to the ABC1 family. UbiB subfamily.

Its subcellular location is the cell inner membrane. The protein operates within cofactor biosynthesis; ubiquinone biosynthesis [regulation]. Its function is as follows. Is probably a protein kinase regulator of UbiI activity which is involved in aerobic coenzyme Q (ubiquinone) biosynthesis. The sequence is that of Probable protein kinase UbiB from Tolumonas auensis (strain DSM 9187 / NBRC 110442 / TA 4).